A 295-amino-acid polypeptide reads, in one-letter code: MGESLDRCIDDINRAVDSMSTLYFKPPGIFHNAILQGASNKASIRKDITRLIKDCNHDEAYLLFKVNPEKQSVSRRDGKEGVFDYVIKRDTDMKRNRRLGRPGEKPIIHVPKEVYLNKDRLDLNNKRRRTATTSGGGLNGFIFDTDLIGSSVISNSSSGTFKALSAVFKDDPQIQRLLYALENGSVLMEEESNNQRRKTIFVEDFPTDLILKVMAEVTDLWPLTEFKQDYDQLYHNYEQLSSKLRFIKKEVLLQDDRLKTMSQYHPSSSHDVAKIIRKEKDEIRRLEMEIANLQE.

At Thr-199 the chain carries Phosphothreonine; by IPL1. The stretch at 223 to 295 (LTEFKQDYDQ…LEMEIANLQE (73 aa)) forms a coiled coil.

This sequence belongs to the DASH complex SPC34 family. In terms of assembly, component of the DASH complex consisting of ASK1, DAD1, DAD2, DAD3, DAD4, DAM1, DUO1, HSK3, SPC19 and SPC34, with a stoichiometry of one copy of each subunit per complex. Multiple DASH complexes oligomerize to form a ring that encircles spindle microtubules and organizes the rod-like NDC80 complexes of the outer kinetochore. DASH complex oligomerization strengthens microtubule attachments. On cytoplasmic microtubules, DASH complexes appear to form patches instead of rings.

It localises to the nucleus. The protein resides in the cytoplasm. The protein localises to the cytoskeleton. It is found in the spindle. Its subcellular location is the chromosome. It localises to the centromere. The protein resides in the kinetochore. In terms of biological role, component of the DASH complex that connects microtubules with kinetochores and couples microtubule depolymerisation to chromosome movement; it is involved in retrieving kinetochores to the spindle poles before their re-orientation on the spindle in early mitosis and allows microtubule depolymerization to pull chromosomes apart and resist detachment during anaphase. Kinetochores, consisting of a centromere-associated inner segment and a microtubule-contacting outer segment, play a crucial role in chromosome segregation by mediating the physical connection between centromeric DNA and microtubules. Kinetochores also serve as an input point for the spindle assembly checkpoint, which delays anaphase until all chromosomes have bioriented on the mitotic spindle. During spindle-kinetochore attachment, kinetochores first attach to the lateral surface of spindle microtubules, which supports the congression of chromosomes toward the middle of the dividing cell; they then slide along towards the spindle pole, a process independent of the DASH complex but requiring the NDC80 complex. When the end of a disassembling microtubule reaches the laterally attached kinetochore, the DASH complex together with the NDC80 complex and STU2 convert lateral attachment to end-on capture to produce a structure that can track with microtubule shortening and sustain attachment when tension is applied across sister kinetochores upon their biorientation. Microtubule depolymerization proceeds by protofilament splaying and induces the kinetochore-attached DASH complex to slide longitudinally, thereby helping to transduce depolymerization energy into pulling forces to disjoin chromatids. Incorrect microtubule attachments are corrected by releasing microubules from the kinetochore through phosphorylation by IPL1 of kinetochore components. Links the microtubule cytoskeleton to chromosomes during interphase. Also contributes to the poleward transport of kinetochores on microtubules following centromeric DNA replication in S-phase. In Saccharomyces cerevisiae (strain ATCC 204508 / S288c) (Baker's yeast), this protein is DASH complex subunit SPC34 (SPC34).